The chain runs to 186 residues: Tetratricopeptide repeat protein 36 (186 aa).

3 TPR repeats span residues 48 to 81 (SKAL…LPDR), 83 to 115 (SAYN…SGGR), and 120 to 153 (RQSF…GSPF).

The protein belongs to the TTC36 family.

The sequence is that of Tetratricopeptide repeat protein 36 (Ttc36) from Mus musculus (Mouse).